A 328-amino-acid polypeptide reads, in one-letter code: GMP reductase (328 aa).

The active-site Thioimidate intermediate is the Cys-176. 205-228 lines the NADP(+) pocket; sequence IIADGGIRTHGDIAKSIRFGASMI.

Belongs to the IMPDH/GMPR family. GuaC type 2 subfamily.

It carries out the reaction IMP + NH4(+) + NADP(+) = GMP + NADPH + 2 H(+). In terms of biological role, catalyzes the irreversible NADPH-dependent deamination of GMP to IMP. It functions in the conversion of nucleobase, nucleoside and nucleotide derivatives of G to A nucleotides, and in maintaining the intracellular balance of A and G nucleotides. The polypeptide is GMP reductase (Streptococcus pneumoniae serotype 19F (strain G54)).